A 573-amino-acid chain; its full sequence is MTAEAPPLGELEAIRPYPARTGPKGSLVYKLITTTDHKMIGIMYCVACISFFFIGGLLALLMRTELAAPGLQFLSNEQFNQLFTMHGTIMLLFYATPIVFGFANLVLPLQIGAPDVAFPRLNAFSFWLFVFGATIGAAGFITPGGAADFGWTAYTPLTDAIHSPGAGGDLWIMGLIVAGLGTILGAVNMITTVVCMRAPGMTMFRMPIFTWNIMVTSILILIAFPLLTAALFGLAADRHLGAHIYDAANGGVLLWQHLFWFFGHPEVYIIALPFFGIVSEIFPVFSRKPIFGYTTLVYATLSIAALSVAVWAHHMFATGAVLLPFFSFMTYLIAVPTGIKFFNWIGTMWKGQLTFETPMLFSVGFMVTFLLGGLTGVLLASPPLDFHVTDSYFVVAHFHYVLFGTIVFATFAGIYFWFPKMTGRLLDERLGKLHFWLTFIGFHTTFLVQHWLGDEGMPRRYADYLPTDGFQGLNVVSTIGAFILGASMFPFVWNVFKSWRYGEVVTVDDPWGYGNSLEWATSCPPPRHNFTELPRIRSERPAFELHYPHMVERLRAEAHVGRHHDEPAMVTSS.

Residues 40-60 (IGIMYCVACISFFFIGGLLAL) traverse the membrane as a helical segment. His86 is a Fe(II)-heme a binding site. Helical transmembrane passes span 89-109 (IMLLFYATPIVFGFANLVLPL), 121-141 (LNAFSFWLFVFGATIGAAGFI), 170-190 (LWIMGLIVAGLGTILGAVNMI), 213-233 (IMVTSILILIAFPLLTAALFG), 258-278 (LFWFFGHPEVYIIALPFFGIV), and 290-310 (IFGYTTLVYATLSIAALSVAV). Positions 264 and 268 each coordinate Cu cation. Residues 264–268 (HPEVY) constitute a cross-link (1'-histidyl-3'-tyrosine (His-Tyr)). His313 and His314 together coordinate Cu cation. 2 consecutive transmembrane segments (helical) span residues 315 to 335 (MFATGAVLLPFFSFMTYLIAV) and 359 to 379 (MLFSVGFMVTFLLGGLTGVLL). His397 contacts heme a3. 3 helical membrane-spanning segments follow: residues 398-418 (FHYVLFGTIVFATFAGIYFWF), 433-453 (LHFWLTFIGFHTTFLVQHWLG), and 476-496 (VSTIGAFILGASMFPFVWNVF). His399 is a binding site for Fe(II)-heme a.

It belongs to the heme-copper respiratory oxidase family.

The protein localises to the cell membrane. The catalysed reaction is 4 Fe(II)-[cytochrome c] + O2 + 8 H(+)(in) = 4 Fe(III)-[cytochrome c] + 2 H2O + 4 H(+)(out). Its pathway is energy metabolism; oxidative phosphorylation. Its function is as follows. Cytochrome c oxidase is the component of the respiratory chain that catalyzes the reduction of oxygen to water. Subunits 1-3 form the functional core of the enzyme complex. CO I is the catalytic subunit of the enzyme. Electrons originating in cytochrome c are transferred via the copper A center of subunit 2 and heme A of subunit 1 to the bimetallic center formed by heme A3 and copper B. The chain is Probable cytochrome c oxidase subunit 1 (ctaD) from Mycobacterium bovis (strain ATCC BAA-935 / AF2122/97).